Here is a 113-residue protein sequence, read N- to C-terminus: Endoribonuclease SymE (113 aa).

The SpoVT-AbrB domain occupies 29–74; the sequence is SRYPDYSRIPAITLKGQWLEAAGFATGTVVDVKVMEGCIVLTAQPP.

It belongs to the SymE family.

It is found in the cytoplasm. In terms of biological role, involved in the degradation and recycling of damaged RNA. It is itself a target for degradation by the ATP-dependent protease Lon. The protein is Endoribonuclease SymE of Escherichia coli (strain 55989 / EAEC).